Here is a 471-residue protein sequence, read N- to C-terminus: UDP-N-acetylmuramate--L-alanine ligase (471 aa).

114–120 (GTHGKTT) is a binding site for ATP.

The protein belongs to the MurCDEF family.

The protein resides in the cytoplasm. The catalysed reaction is UDP-N-acetyl-alpha-D-muramate + L-alanine + ATP = UDP-N-acetyl-alpha-D-muramoyl-L-alanine + ADP + phosphate + H(+). It functions in the pathway cell wall biogenesis; peptidoglycan biosynthesis. In terms of biological role, cell wall formation. The polypeptide is UDP-N-acetylmuramate--L-alanine ligase (Rhizobium meliloti (strain 1021) (Ensifer meliloti)).